A 521-amino-acid chain; its full sequence is Glucose-6-phosphate isomerase (521 aa).

Glutamate 327 serves as the catalytic Proton donor. Residues histidine 358 and lysine 486 contribute to the active site.

This sequence belongs to the GPI family.

It localises to the cytoplasm. The enzyme catalyses alpha-D-glucose 6-phosphate = beta-D-fructose 6-phosphate. The protein operates within carbohydrate biosynthesis; gluconeogenesis. It participates in carbohydrate degradation; glycolysis; D-glyceraldehyde 3-phosphate and glycerone phosphate from D-glucose: step 2/4. Its function is as follows. Catalyzes the reversible isomerization of glucose-6-phosphate to fructose-6-phosphate. This Bordetella bronchiseptica (strain ATCC BAA-588 / NCTC 13252 / RB50) (Alcaligenes bronchisepticus) protein is Glucose-6-phosphate isomerase.